Here is a 150-residue protein sequence, read N- to C-terminus: Small ribosomal subunit protein uS15 (150 aa).

Residues 1–22 form a disordered region; that stretch reads MNKRREKGQSHSTRPPHPQPPQ.

Belongs to the universal ribosomal protein uS15 family. As to quaternary structure, part of the 30S ribosomal subunit.

This is Small ribosomal subunit protein uS15 from Aeropyrum pernix (strain ATCC 700893 / DSM 11879 / JCM 9820 / NBRC 100138 / K1).